A 252-amino-acid polypeptide reads, in one-letter code: tRNA (guanine-N(1)-)-methyltransferase (252 aa).

S-adenosyl-L-methionine-binding positions include glycine 116 and 135–140 (LGDYVL).

The protein belongs to the RNA methyltransferase TrmD family. Homodimer.

It localises to the cytoplasm. It carries out the reaction guanosine(37) in tRNA + S-adenosyl-L-methionine = N(1)-methylguanosine(37) in tRNA + S-adenosyl-L-homocysteine + H(+). Specifically methylates guanosine-37 in various tRNAs. This chain is tRNA (guanine-N(1)-)-methyltransferase, found in Limosilactobacillus fermentum (strain NBRC 3956 / LMG 18251) (Lactobacillus fermentum).